A 278-amino-acid chain; its full sequence is TnpB-like protein MJ0751 (278 aa).

Zn(2+) is bound by residues cysteine 222, cysteine 225, cysteine 239, and cysteine 242.

In the N-terminal section; belongs to the transposase 2 family. This sequence in the C-terminal section; belongs to the transposase 35 family.

The sequence is that of TnpB-like protein MJ0751 from Methanocaldococcus jannaschii (strain ATCC 43067 / DSM 2661 / JAL-1 / JCM 10045 / NBRC 100440) (Methanococcus jannaschii).